We begin with the raw amino-acid sequence, 596 residues long: Cysteine--tRNA ligase (596 aa).

The tract at residues 1–199 (MKSKTFLEKN…SQRYFEELRK (199 aa)) is unknown. C212 serves as a coordination point for Zn(2+). Residues 214–224 (PTVYDEVHIGN) carry the 'HIGH' region motif. Zn(2+)-binding residues include C377, H403, and E407. The short motif at 435-439 (KMSKS) is the 'KMSKS' region element. K438 serves as a coordination point for ATP.

This sequence belongs to the class-I aminoacyl-tRNA synthetase family. As to quaternary structure, monomer. Requires Zn(2+) as cofactor.

The protein localises to the cytoplasm. It catalyses the reaction tRNA(Cys) + L-cysteine + ATP = L-cysteinyl-tRNA(Cys) + AMP + diphosphate. The polypeptide is Cysteine--tRNA ligase (cysS) (Mycoplasmopsis pulmonis (strain UAB CTIP) (Mycoplasma pulmonis)).